The sequence spans 60 residues: Cytotoxin 5 (60 aa).

4 disulfides stabilise this stretch: Cys-3/Cys-21, Cys-14/Cys-38, Cys-42/Cys-53, and Cys-54/Cys-59.

This sequence belongs to the three-finger toxin family. Short-chain subfamily. Type IA cytotoxin sub-subfamily. In terms of assembly, monomer in solution; Homodimer and oligomer in the presence of negatively charged lipids forming a pore with a size ranging between 20 and 30 Angstroms. In terms of tissue distribution, expressed by the venom gland.

The protein resides in the secreted. It localises to the target cell membrane. Functionally, shows cytolytic activity on many different cells by forming pore in lipid membranes. In vivo, increases heart rate or kills the animal by cardiac arrest. In addition, it binds to heparin with high affinity, interacts with Kv channel-interacting protein 1 (KCNIP1) in a calcium-independent manner, and binds to integrin alpha-V/beta-3 (ITGAV/ITGB3) with moderate affinity. The sequence is that of Cytotoxin 5 from Naja mossambica (Mozambique spitting cobra).